We begin with the raw amino-acid sequence, 78 residues long: MSTIEESVKSIIAEQLGVKKEEVTNNASFVDDLGADSLDTVELVMALEEEFDTEIPDEEAEKITTVQAAIDFIKESKK.

One can recognise a Carrier domain in the interval 2–77; sequence STIEESVKSI…AAIDFIKESK (76 aa). O-(pantetheine 4'-phosphoryl)serine is present on Ser37.

The protein belongs to the acyl carrier protein (ACP) family. Post-translationally, 4'-phosphopantetheine is transferred from CoA to a specific serine of apo-ACP by AcpS. This modification is essential for activity because fatty acids are bound in thioester linkage to the sulfhydryl of the prosthetic group.

It is found in the cytoplasm. It participates in lipid metabolism; fatty acid biosynthesis. Its function is as follows. Carrier of the growing fatty acid chain in fatty acid biosynthesis. In Wigglesworthia glossinidia brevipalpis, this protein is Acyl carrier protein.